Consider the following 157-residue polypeptide: Small ribosomal subunit protein uS7 (157 aa).

It belongs to the universal ribosomal protein uS7 family. In terms of assembly, part of the 30S ribosomal subunit. Contacts proteins S9 and S11.

One of the primary rRNA binding proteins, it binds directly to 16S rRNA where it nucleates assembly of the head domain of the 30S subunit. Is located at the subunit interface close to the decoding center, probably blocks exit of the E-site tRNA. The polypeptide is Small ribosomal subunit protein uS7 (Chlamydia trachomatis serovar L2 (strain ATCC VR-902B / DSM 19102 / 434/Bu)).